The sequence spans 81 residues: Large ribosomal subunit protein bL27 (81 aa).

A compositionally biased stretch (polar residues) spans 1–11; sequence MATSKSGGSSK. The tract at residues 1–20 is disordered; sequence MATSKSGGSSKNGRDSISKR.

It belongs to the bacterial ribosomal protein bL27 family.

The sequence is that of Large ribosomal subunit protein bL27 from Borreliella afzelii (strain PKo) (Borrelia afzelii).